The primary structure comprises 677 residues: Levanase (677 aa).

The N-terminal stretch at 1 to 24 is a signal peptide; sequence MKKRLIQVMIMFTLLLTMAFSADA. Substrate-binding positions include 46-49, glutamine 65, tryptophan 73, 105-106, 171-172, glutamate 223, and tryptophan 313; these read WMND, FS, and RD. Aspartate 49 is an active-site residue.

Belongs to the glycosyl hydrolase 32 family.

The protein resides in the secreted. It catalyses the reaction Hydrolysis of terminal, non-reducing (2-&gt;1)- and (2-&gt;6)-linked beta-D-fructofuranose residues in fructans.. With respect to regulation, is completely inhibited by Ag(+) and Hg(2+) ions. Its function is as follows. Exo-fructosidase that can hydrolyze both levan and inulin, leading to the production of free fructose. Is also able to hydrolyze sucrose and to a small extent raffinose, but not melezitose, stachylose, cellobiose, maltose, and lactose. This is Levanase (sacC) from Bacillus subtilis (strain 168).